The sequence spans 200 residues: MEKFYKENEGKPENKGRAEDEGSTEEGGKADEDKSDAEGKPARQGKLEVEGGPGEQAQQKGEGKPEKQGKSDGEGKRQGESKPDSQAKSASEARAAEKRPAEDYVPRKAKRKTDRGTDDSPKNSQEDLQDRHVSSEEMMRECADMTRAQEELRKRQKMGGFHWVPRDAQDALVPRGQRGVRGVRGGGGRGQKDLEDAPFV.

Basic and acidic residues-rich tracts occupy residues 1-49, 61-85, 94-106, 114-153, and 190-200; these read MEKF…KLEV, GEGKPEKQGKSDGEGKRQGESKPDS, RAAEKRPAEDYVP, DRGTDDSPKNSQEDLQDRHVSSEEMMRECADMTRAQEELR, and GQKDLEDAPFV. Residues 1 to 200 are disordered; that stretch reads MEKFYKENEG…QKDLEDAPFV (200 aa).

This sequence belongs to the TFS-II family. TFA subfamily.

The protein localises to the nucleus. Functionally, may be involved in transcriptional regulation. This Mus musculus (Mouse) protein is Transcription elongation factor A protein-like 5 (Tceal5).